A 406-amino-acid chain; its full sequence is Coenzyme A biosynthesis bifunctional protein CoaBC (406 aa).

Residues 2–190 form a phosphopantothenoylcysteine decarboxylase region; that stretch reads SLAGKKIVLG…SPVNDLKHLN (189 aa). Cys158 acts as the Proton donor in catalysis. The phosphopantothenate--cysteine ligase stretch occupies residues 191–406; that stretch reads IMITAGPTRE…VTRYDEKNRR (216 aa). CTP-binding positions include 273 to 275, Asp279, Lys289, 308 to 311, Phe327, Lys341, and Lys345; these read GCA and PDIV.

It in the N-terminal section; belongs to the HFCD (homo-oligomeric flavin containing Cys decarboxylase) superfamily. In the C-terminal section; belongs to the PPC synthetase family. Mg(2+) is required as a cofactor. The cofactor is FMN.

It carries out the reaction N-[(R)-4-phosphopantothenoyl]-L-cysteine + H(+) = (R)-4'-phosphopantetheine + CO2. It catalyses the reaction (R)-4'-phosphopantothenate + L-cysteine + CTP = N-[(R)-4-phosphopantothenoyl]-L-cysteine + CMP + diphosphate + H(+). It functions in the pathway cofactor biosynthesis; coenzyme A biosynthesis; CoA from (R)-pantothenate: step 2/5. Its pathway is cofactor biosynthesis; coenzyme A biosynthesis; CoA from (R)-pantothenate: step 3/5. Catalyzes two sequential steps in the biosynthesis of coenzyme A. In the first step cysteine is conjugated to 4'-phosphopantothenate to form 4-phosphopantothenoylcysteine. In the second step the latter compound is decarboxylated to form 4'-phosphopantotheine. The polypeptide is Coenzyme A biosynthesis bifunctional protein CoaBC (Escherichia coli O6:H1 (strain CFT073 / ATCC 700928 / UPEC)).